The sequence spans 286 residues: MPRMKDIPTKSSPGTDNSEKDEAVIEEDLSLNGQPFFTDNTDGGENEVSWTSSLLSTYVGCQPPAIPVCETVIDLTAPSQSGAPGDEHLPCSLNAETKFHIPDPSWTLSHTPPRGPHISQQLPTRRSKRRLHRKFEEERLCTKAKQGAGRPVPASVVKVGNITPHYGEELTRGDAVPAAPITPPYPRVQRPAQPTHVLFSPVFVSLKAEVCDQSHSPTRKQGRYGRVSSKAYTRQLQQALEEKDAQLCFLAARLEAHKEQIIFLRDMLMRMCQQPASPTDAPLPPC.

Disordered regions lie at residues 1–22 (MPRMKDIPTKSSPGTDNSEKDE) and 106–130 (WTLSHTPPRGPHISQQLPTRRSKRR).

Interacts with host HDAC1 and HDAC2, these interactions suppress HDAC activities. Interacts with protein ORF57. Interacts with protein vPK. Sumoylated.

It participates in protein modification; protein sumoylation. SUMO E3 ligase that plays a role in viral gene regulation and is essential for viral reactivation. Disrupts host G1 cell cycle control thus allowing viral transcription and translation to proceed at the early stages of infection. Catalyzes its own SUMO modification as well as that of its interacting partners such as host TP53 and RB1. Regulates viral gene expression and reactivation and may mediate the SUMOylation of viral promoters in the low methylated 'Lys-9' histone H3 (H3K9me) region which results in a diminution of viral gene expression after reactivation. SUMOylates also host histone lysine demethylase 4A/KDM4A, an essential step for complete enrichment of SUMO-2/3 on the viral genome during viral transactivation and reactivation. The polypeptide is E3 SUMO-protein ligase K-bZIP (K8) (Human herpesvirus 8 type P (isolate GK18) (HHV-8)).